The following is a 669-amino-acid chain: Histone-lysine N-methyltransferase, H3 lysine-9 specific SUVH3 (669 aa).

2 disordered regions span residues 56 to 127 and 270 to 290; these read YSSF…EKKT and ESLI…ASDQ. Polar residues-rich tracts occupy residues 65 to 82 and 93 to 107; these read QQPT…NTPI and RTPT…SSGT. Residues 108–120 constitute a DNA-binding region (a.T hook); that stretch reads KRGVGRPKGTTSV. Positions 208–355 constitute a YDG domain; the sequence is GTVPGIEVGD…CNTFKYKLVR (148 aa). One can recognise a Pre-SET domain in the interval 430-491; it reads IGCSCSGSCS…SCKNRVIQTG (62 aa). Cysteine 432, cysteine 434, cysteine 438, cysteine 445, cysteine 447, cysteine 473, cysteine 477, cysteine 479, and cysteine 483 together coordinate Zn(2+). The region spanning 494-638 is the SET domain; the sequence is SRLEVFKTRN…PMAELTYDYG (145 aa). Residues 504–506, aspartate 540, tyrosine 542, arginine 592, and 595–596 each bind S-adenosyl-L-methionine; these read RGW and NH. Cysteine 598, cysteine 657, cysteine 659, and cysteine 664 together coordinate Zn(2+). The Post-SET domain occupies 653-669; that stretch reads GQRTCLCGSEQCRGSFG.

It belongs to the class V-like SAM-binding methyltransferase superfamily. Histone-lysine methyltransferase family. Suvar3-9 subfamily. As to expression, expressed in leaves stems and flowers.

The protein resides in the nucleus. It is found in the chromosome. It localises to the centromere. The catalysed reaction is L-lysyl(9)-[histone H3] + S-adenosyl-L-methionine = N(6)-methyl-L-lysyl(9)-[histone H3] + S-adenosyl-L-homocysteine + H(+). In terms of biological role, histone methyltransferase. Methylates 'Lys-9' of histone H3. H3 'Lys-9' methylation represents a specific tag for epigenetic transcriptional repression. In Arabidopsis thaliana (Mouse-ear cress), this protein is Histone-lysine N-methyltransferase, H3 lysine-9 specific SUVH3 (SUVH3).